The primary structure comprises 90 residues: UPF0298 protein RBAM_014860 (90 aa).

Belongs to the UPF0298 family.

It localises to the cytoplasm. This Bacillus velezensis (strain DSM 23117 / BGSC 10A6 / LMG 26770 / FZB42) (Bacillus amyloliquefaciens subsp. plantarum) protein is UPF0298 protein RBAM_014860.